Consider the following 118-residue polypeptide: Ribosome-binding factor A (118 aa).

The protein belongs to the RbfA family. As to quaternary structure, monomer. Binds 30S ribosomal subunits, but not 50S ribosomal subunits or 70S ribosomes.

It localises to the cytoplasm. Functionally, one of several proteins that assist in the late maturation steps of the functional core of the 30S ribosomal subunit. Associates with free 30S ribosomal subunits (but not with 30S subunits that are part of 70S ribosomes or polysomes). Required for efficient processing of 16S rRNA. May interact with the 5'-terminal helix region of 16S rRNA. The protein is Ribosome-binding factor A of Dehalococcoides mccartyi (strain ATCC BAA-2266 / KCTC 15142 / 195) (Dehalococcoides ethenogenes (strain 195)).